A 63-amino-acid chain; its full sequence is MKASELREKSVEELNTELLGLLREQFNLRMQHATGQLTQTNQLKLVRRNIARVKTIITSKAGA.

This sequence belongs to the universal ribosomal protein uL29 family.

The chain is Large ribosomal subunit protein uL29 from Shewanella denitrificans (strain OS217 / ATCC BAA-1090 / DSM 15013).